The sequence spans 396 residues: Phosphopentomutase (396 aa).

The Mn(2+) site is built by Asp13, Asp288, His293, Asp329, His330, and His341.

The protein belongs to the phosphopentomutase family. Mn(2+) is required as a cofactor.

It is found in the cytoplasm. The catalysed reaction is 2-deoxy-alpha-D-ribose 1-phosphate = 2-deoxy-D-ribose 5-phosphate. It catalyses the reaction alpha-D-ribose 1-phosphate = D-ribose 5-phosphate. Its pathway is carbohydrate degradation; 2-deoxy-D-ribose 1-phosphate degradation; D-glyceraldehyde 3-phosphate and acetaldehyde from 2-deoxy-alpha-D-ribose 1-phosphate: step 1/2. Isomerase that catalyzes the conversion of deoxy-ribose 1-phosphate (dRib-1-P) and ribose 1-phosphate (Rib-1-P) to deoxy-ribose 5-phosphate (dRib-5-P) and ribose 5-phosphate (Rib-5-P), respectively. This Clostridium perfringens (strain 13 / Type A) protein is Phosphopentomutase.